The sequence spans 620 residues: Methionine--tRNA ligase (620 aa).

Residues 11–21 carry the 'HIGH' region motif; the sequence is PYANGPRHIGH. Cys-143, Cys-146, Cys-156, and Cys-159 together coordinate Zn(2+). Residues 347–351 carry the 'KMSKS' region motif; the sequence is KFSSS. An ATP-binding site is contributed by Ser-350.

It belongs to the class-I aminoacyl-tRNA synthetase family. MetG type 1 subfamily. Monomer. The cofactor is Zn(2+).

The protein resides in the cytoplasm. It catalyses the reaction tRNA(Met) + L-methionine + ATP = L-methionyl-tRNA(Met) + AMP + diphosphate. Its function is as follows. Is required not only for elongation of protein synthesis but also for the initiation of all mRNA translation through initiator tRNA(fMet) aminoacylation. This chain is Methionine--tRNA ligase, found in Bifidobacterium adolescentis (strain ATCC 15703 / DSM 20083 / NCTC 11814 / E194a).